A 387-amino-acid polypeptide reads, in one-letter code: Double C2-like domain-containing protein gamma (387 aa).

C2 domains follow at residues 83-209 and 243-376; these read ALGT…DICL and ERGR…ELWH. Residues Asp274, Asp280, Asp334, Asp336, and Asp342 each contribute to the Ca(2+) site.

Ca(2+) serves as cofactor.

May be involved in regulation of vesicular trafficking. In vitro, does not bind calcium and phospholipids. In Mus musculus (Mouse), this protein is Double C2-like domain-containing protein gamma (Doc2g).